The following is a 321-amino-acid chain: Phosphate acyltransferase (321 aa).

This sequence belongs to the PlsX family. As to quaternary structure, homodimer. Probably interacts with PlsY.

The protein resides in the cytoplasm. It carries out the reaction a fatty acyl-[ACP] + phosphate = an acyl phosphate + holo-[ACP]. The protein operates within lipid metabolism; phospholipid metabolism. Its function is as follows. Catalyzes the reversible formation of acyl-phosphate (acyl-PO(4)) from acyl-[acyl-carrier-protein] (acyl-ACP). This enzyme utilizes acyl-ACP as fatty acyl donor, but not acyl-CoA. This chain is Phosphate acyltransferase, found in Chlamydia trachomatis serovar L2 (strain ATCC VR-902B / DSM 19102 / 434/Bu).